A 641-amino-acid chain; its full sequence is MIKINLLNHQSHSFPSKTTPLEIWKNWLKKTLKKPVAALFNQKFIELDYPLTQDGDLEILAESNPKSLFVLNHSTAHLMAQAIQRLYPNALFTIGPAIKEGFYYDIDFQNHSISEKDLPTIEKKMHEVALENHSMIMKKVTHDEAKRLFSYNPYKLILLEKHKEEDITVCHQGEFIDLCRGGHIPKLSLIKHFKLLKISGSYFQGDAKNKSLTRIYGTSFFKKEDLGNYLKLLEERKERDHKRLNKKLDLFMFSQEVGLGLPFWLPKGATLRRIVERYIVDKELSHQYHHVYTPIMANVELYRTSGHLEHYSQNMFPVMQLENKEKIVLRPMNCPHHMMIYKKSPRSYKELPLRIAELGMMHRFEKSGAVSGLQRVREMNLNDAHNFVRPDQIEEEIKKIINLILEVYRDFKITKYEFRLSYRDPQDKEKYFPDDNMWQHAENILKKTIQELNLPFREAIGDAAFYGPKLDVQVLTALGNEETLSTIQLDFLLPQKFDLTFIDANNKHCRPVVIHRAIVSTLERFLSHLIEENKGVFPLWLAPVQILLIPVSSSVNLKYTQEIKELLLSQGLRAEINSKEATLGYKIREAQELKIPYQIVVGDNEIAKNLITFRKYGQKNQTTTNIETFISSLNQEIMEKR.

In terms of domain architecture, TGS spans 1-61 (MIKINLLNHQ…TQDGDLEILA (61 aa)). Residues 240 to 538 (DHKRLNKKLD…LIEENKGVFP (299 aa)) form a catalytic region. Zn(2+) contacts are provided by cysteine 334, histidine 385, and histidine 515.

The protein belongs to the class-II aminoacyl-tRNA synthetase family. Homodimer. It depends on Zn(2+) as a cofactor.

Its subcellular location is the cytoplasm. It carries out the reaction tRNA(Thr) + L-threonine + ATP = L-threonyl-tRNA(Thr) + AMP + diphosphate + H(+). Its function is as follows. Catalyzes the attachment of threonine to tRNA(Thr) in a two-step reaction: L-threonine is first activated by ATP to form Thr-AMP and then transferred to the acceptor end of tRNA(Thr). Also edits incorrectly charged L-seryl-tRNA(Thr). The sequence is that of Threonine--tRNA ligase from Phytoplasma australiense.